The primary structure comprises 315 residues: Ribosomal RNA small subunit methyltransferase H (315 aa).

S-adenosyl-L-methionine contacts are provided by residues 33–35 (AGH), aspartate 53, phenylalanine 80, aspartate 101, and glutamine 108.

Belongs to the methyltransferase superfamily. RsmH family.

The protein resides in the cytoplasm. The enzyme catalyses cytidine(1402) in 16S rRNA + S-adenosyl-L-methionine = N(4)-methylcytidine(1402) in 16S rRNA + S-adenosyl-L-homocysteine + H(+). In terms of biological role, specifically methylates the N4 position of cytidine in position 1402 (C1402) of 16S rRNA. This Natranaerobius thermophilus (strain ATCC BAA-1301 / DSM 18059 / JW/NM-WN-LF) protein is Ribosomal RNA small subunit methyltransferase H.